Consider the following 130-residue polypeptide: Chorion class B protein PC10 (130 aa).

Residues 1–22 (GAWNGRLGCGCGGIAPAAELAA) are left arm. The tract at residues 23 to 93 (SYGGGLGVAS…GNGALGITAE (71 aa)) is central domain. Positions 94–130 (RGYGAGIGYEGLGLGYGAGIGYKGYGLGGCGCGCGRL) are right arm (Gly-rich tandem repeats).

It belongs to the chorion protein family.

Its function is as follows. This protein is one of many from the eggshell of the silk moth. The chain is Chorion class B protein PC10 from Antheraea polyphemus (Polyphemus moth).